Reading from the N-terminus, the 342-residue chain is Tetraacyldisaccharide 4'-kinase (342 aa).

68 to 75 (TVGGTGKT) is a binding site for ATP.

Belongs to the LpxK family.

It carries out the reaction a lipid A disaccharide + ATP = a lipid IVA + ADP + H(+). It functions in the pathway glycolipid biosynthesis; lipid IV(A) biosynthesis; lipid IV(A) from (3R)-3-hydroxytetradecanoyl-[acyl-carrier-protein] and UDP-N-acetyl-alpha-D-glucosamine: step 6/6. In terms of biological role, transfers the gamma-phosphate of ATP to the 4'-position of a tetraacyldisaccharide 1-phosphate intermediate (termed DS-1-P) to form tetraacyldisaccharide 1,4'-bis-phosphate (lipid IVA). The sequence is that of Tetraacyldisaccharide 4'-kinase from Burkholderia multivorans (strain ATCC 17616 / 249).